The primary structure comprises 140 residues: Lymphocyte antigen 6H (140 aa).

A signal peptide spans 1 to 25 (MLPAAMKGLGLVLLAALLCSSPAHG). Positions 26–91 (LWCQDCTLTT…RHFFSDYLMG (66 aa)) constitute a UPAR/Ly6 domain. 5 disulfide bridges follow: Cys28/Cys52, Cys31/Cys40, Cys45/Cys73, Cys77/Cys104, and Cys105/Cys110. Asn36 is a glycosylation site (N-linked (GlcNAc...) asparagine).

It is found in the cell membrane. The protein is Lymphocyte antigen 6H (LY6H) of Bos taurus (Bovine).